The following is a 258-amino-acid chain: GTP cyclohydrolase FolE2 (258 aa).

The protein belongs to the GTP cyclohydrolase IV family.

It carries out the reaction GTP + H2O = 7,8-dihydroneopterin 3'-triphosphate + formate + H(+). It participates in cofactor biosynthesis; 7,8-dihydroneopterin triphosphate biosynthesis; 7,8-dihydroneopterin triphosphate from GTP: step 1/1. Converts GTP to 7,8-dihydroneopterin triphosphate. The polypeptide is GTP cyclohydrolase FolE2 (Pseudothermotoga lettingae (strain ATCC BAA-301 / DSM 14385 / NBRC 107922 / TMO) (Thermotoga lettingae)).